The following is a 349-amino-acid chain: Methylthioribose-1-phosphate isomerase (349 aa).

Substrate is bound by residues 49–51 (RGA), Arg93, and Gln201. Asp242 acts as the Proton donor in catalysis. 252-253 (NK) contributes to the substrate binding site.

The protein belongs to the EIF-2B alpha/beta/delta subunits family. MtnA subfamily.

It carries out the reaction 5-(methylsulfanyl)-alpha-D-ribose 1-phosphate = 5-(methylsulfanyl)-D-ribulose 1-phosphate. Its pathway is amino-acid biosynthesis; L-methionine biosynthesis via salvage pathway; L-methionine from S-methyl-5-thio-alpha-D-ribose 1-phosphate: step 1/6. In terms of biological role, catalyzes the interconversion of methylthioribose-1-phosphate (MTR-1-P) into methylthioribulose-1-phosphate (MTRu-1-P). The chain is Methylthioribose-1-phosphate isomerase from Petrotoga mobilis (strain DSM 10674 / SJ95).